The chain runs to 415 residues: Gamma-glutamyl phosphate reductase (415 aa).

It belongs to the gamma-glutamyl phosphate reductase family.

Its subcellular location is the cytoplasm. The catalysed reaction is L-glutamate 5-semialdehyde + phosphate + NADP(+) = L-glutamyl 5-phosphate + NADPH + H(+). Its pathway is amino-acid biosynthesis; L-proline biosynthesis; L-glutamate 5-semialdehyde from L-glutamate: step 2/2. In terms of biological role, catalyzes the NADPH-dependent reduction of L-glutamate 5-phosphate into L-glutamate 5-semialdehyde and phosphate. The product spontaneously undergoes cyclization to form 1-pyrroline-5-carboxylate. In Clostridium perfringens (strain SM101 / Type A), this protein is Gamma-glutamyl phosphate reductase.